We begin with the raw amino-acid sequence, 675 residues long: Transketolase, chloroplastic (675 aa).

Residues H78 and G127–L129 contribute to the thiamine diphosphate site. Mg(2+) is bound at residue D168. Residues G169, E173, and N198 each contribute to the thiamine diphosphate site. N198 and I200 together coordinate Mg(2+). H275 contacts thiamine diphosphate. The substrate site is built by H275, R369, and S396. Thiamine diphosphate contacts are provided by residues E423 and F450–Y453. The active-site Proton donor is the E423. Substrate contacts are provided by H474, D482, and R533.

As to quaternary structure, homodimer. Mg(2+) serves as cofactor. Ca(2+) is required as a cofactor. The cofactor is Mn(2+). Requires Co(2+) as cofactor. It depends on thiamine diphosphate as a cofactor.

It localises to the plastid. It is found in the chloroplast thylakoid membrane. It carries out the reaction D-sedoheptulose 7-phosphate + D-glyceraldehyde 3-phosphate = aldehydo-D-ribose 5-phosphate + D-xylulose 5-phosphate. It participates in carbohydrate biosynthesis; Calvin cycle. Its function is as follows. Catalyzes the reversible transfer of a two-carbon ketol group from fructose-6-phosphate or sedoheptulose-7-phosphate to glyceraldehyde-3-phosphate to yield xylulose-5-phosphate and erythrose-4-phosphate or ribose-5-phosphate, respectively. The polypeptide is Transketolase, chloroplastic (Zea mays (Maize)).